The sequence spans 192 residues: Thymidine kinase (192 aa).

ATP is bound by residues 9–16 (SAMNAGKS) and 87–90 (DECQ). Glu88 (proton acceptor) is an active-site residue. Zn(2+)-binding residues include Cys145, Cys147, Cys182, and His185.

This sequence belongs to the thymidine kinase family. Homotetramer.

It localises to the cytoplasm. It catalyses the reaction thymidine + ATP = dTMP + ADP + H(+). The polypeptide is Thymidine kinase (Shewanella oneidensis (strain ATCC 700550 / JCM 31522 / CIP 106686 / LMG 19005 / NCIMB 14063 / MR-1)).